The following is a 285-amino-acid chain: GTP cyclohydrolase 1 type 2 homolog (285 aa).

H65, H66, D104, H230, and E234 together coordinate a divalent metal cation.

It belongs to the GTP cyclohydrolase I type 2/NIF3 family. Homohexamer.

This is GTP cyclohydrolase 1 type 2 homolog from Streptomyces coelicolor (strain ATCC BAA-471 / A3(2) / M145).